The chain runs to 154 residues: Myoglobin (154 aa).

A Globin domain is found at 2–148; that stretch reads GLSDGEWELV…FRNDIAAKYK (147 aa). Ser-4 bears the Phosphoserine mark. A Phosphothreonine modification is found at Thr-68. Heme b is bound at residue His-94.

Belongs to the globin family. Monomeric.

It localises to the cytoplasm. The protein resides in the sarcoplasm. The enzyme catalyses Fe(III)-heme b-[protein] + nitric oxide + H2O = Fe(II)-heme b-[protein] + nitrite + 2 H(+). The catalysed reaction is H2O2 + AH2 = A + 2 H2O. Its function is as follows. Monomeric heme protein which primary function is to store oxygen and facilitate its diffusion within muscle tissues. Reversibly binds oxygen through a pentacoordinated heme iron and enables its timely and efficient release as needed during periods of heightened demand. Depending on the oxidative conditions of tissues and cells, and in addition to its ability to bind oxygen, it also has a nitrite reductase activity whereby it regulates the production of bioactive nitric oxide. Under stress conditions, like hypoxia and anoxia, it also protects cells against reactive oxygen species thanks to its pseudoperoxidase activity. The sequence is that of Myoglobin (MB) from Elephas maximus (Indian elephant).